A 201-amino-acid polypeptide reads, in one-letter code: 3-isopropylmalate dehydratase small subunit (201 aa).

Belongs to the LeuD family. LeuD type 1 subfamily. Heterodimer of LeuC and LeuD.

It catalyses the reaction (2R,3S)-3-isopropylmalate = (2S)-2-isopropylmalate. It functions in the pathway amino-acid biosynthesis; L-leucine biosynthesis; L-leucine from 3-methyl-2-oxobutanoate: step 2/4. Its function is as follows. Catalyzes the isomerization between 2-isopropylmalate and 3-isopropylmalate, via the formation of 2-isopropylmaleate. The sequence is that of 3-isopropylmalate dehydratase small subunit from Shewanella oneidensis (strain ATCC 700550 / JCM 31522 / CIP 106686 / LMG 19005 / NCIMB 14063 / MR-1).